We begin with the raw amino-acid sequence, 206 residues long: MAKESTTIDVGEPSTVTKSSSHVVKDAKKKGFVAVASRGGAKRGLAIFDFLLRLAAIAVTIGAASVMYTAEETLPFFTQFLQFQAGYDDLPAFQYFVIAVAVVASYLVLSLPFSIVSIVRPHAVAPRLILLICDTLVVTLNTSAAAAAASITYLAHNGNQSTNWLPICQQFGDFCQNVSTAVVADSIAILFFIVLIIISAIALKRH.

A2 is subject to N-acetylalanine. Over 2–43 the chain is Cytoplasmic; it reads AKESTTIDVGEPSTVTKSSSHVVKDAKKKGFVAVASRGGAKR. The helical transmembrane segment at 44–64 threads the bilayer; sequence GLAIFDFLLRLAAIAVTIGAA. The Extracellular portion of the chain corresponds to 65 to 95; sequence SVMYTAEETLPFFTQFLQFQAGYDDLPAFQY. Residues 96-116 traverse the membrane as a helical segment; sequence FVIAVAVVASYLVLSLPFSIV. Over 117 to 127 the chain is Cytoplasmic; it reads SIVRPHAVAPR. Residues 128-148 form a helical membrane-spanning segment; sequence LILLICDTLVVTLNTSAAAAA. Residues 149 to 180 lie on the Extracellular side of the membrane; the sequence is ASITYLAHNGNQSTNWLPICQQFGDFCQNVST. N159 and N177 each carry an N-linked (GlcNAc...) asparagine glycan. A helical transmembrane segment spans residues 181–201; it reads AVVADSIAILFFIVLIIISAI. The Cytoplasmic portion of the chain corresponds to 202–206; that stretch reads ALKRH.

It belongs to the Casparian strip membrane proteins (CASP) family. Homodimer and heterodimers with other CASP proteins. Interacts with CASP2, CASP3, CASP4 and CASP5.

It is found in the cell membrane. Its function is as follows. Regulates membrane-cell wall junctions and localized cell wall deposition. Required for establishment of the Casparian strip membrane domain (CSD) and the subsequent formation of Casparian strips, a cell wall modification of the root endodermis that determines an apoplastic barrier between the intraorganismal apoplasm and the extraorganismal apoplasm and prevents lateral diffusion. The protein is Casparian strip membrane protein 1 (CASP1) of Arabidopsis thaliana (Mouse-ear cress).